The following is a 91-amino-acid chain: C-C motif chemokine 5 (91 aa).

The N-terminal stretch at 1–23 (MKVSAATFAILLATATFRAPASA) is a signal peptide. 2 disulfides stabilise this stretch: C33–C57 and C34–C73.

Belongs to the intercrine beta (chemokine CC) family.

It localises to the secreted. In terms of biological role, chemoattractant for blood monocytes, memory T-helper cells and eosinophils. Causes the release of histamine from basophils and activates eosinophils. May activate several chemokine receptors including CCR1, CCR3, CCR4 and CCR5. May also be an agonist of the G protein-coupled receptor GPR75. Together with GPR75, may play a role in neuron survival through activation of a downstream signaling pathway involving the PI3, Akt and MAP kinases. By activating GPR75 may also play a role in insulin secretion by islet cells. This chain is C-C motif chemokine 5 (CCL5), found in Canis lupus familiaris (Dog).